The following is a 171-amino-acid chain: 3-hydroxydecanoyl-[acyl-carrier-protein] dehydratase (171 aa).

Histidine 70 is an active-site residue.

The protein belongs to the thioester dehydratase family. FabA subfamily. In terms of assembly, homodimer.

It localises to the cytoplasm. It catalyses the reaction a (3R)-hydroxyacyl-[ACP] = a (2E)-enoyl-[ACP] + H2O. The enzyme catalyses (3R)-hydroxydecanoyl-[ACP] = (2E)-decenoyl-[ACP] + H2O. The catalysed reaction is (2E)-decenoyl-[ACP] = (3Z)-decenoyl-[ACP]. Its pathway is lipid metabolism; fatty acid biosynthesis. Its function is as follows. Necessary for the introduction of cis unsaturation into fatty acids. Catalyzes the dehydration of (3R)-3-hydroxydecanoyl-ACP to E-(2)-decenoyl-ACP and then its isomerization to Z-(3)-decenoyl-ACP. Can catalyze the dehydratase reaction for beta-hydroxyacyl-ACPs with saturated chain lengths up to 16:0, being most active on intermediate chain length. The protein is 3-hydroxydecanoyl-[acyl-carrier-protein] dehydratase of Pseudomonas putida (strain ATCC 700007 / DSM 6899 / JCM 31910 / BCRC 17059 / LMG 24140 / F1).